The following is a 456-amino-acid chain: Taurine--pyruvate aminotransferase (456 aa).

Lysine 280 is modified (N6-(pyridoxal phosphate)lysine).

It belongs to the class-III pyridoxal-phosphate-dependent aminotransferase family. As to quaternary structure, homotetramer. The cofactor is pyridoxal 5'-phosphate.

The enzyme catalyses taurine + pyruvate = sulfoacetaldehyde + L-alanine. The protein operates within organosulfur degradation; alkanesulfonate degradation. Involved in an anaerobic respiration pathway that converts the sulfonate taurine (2-aminoethanesulfonate) to ammonia, acetate and sulfide. Catalyzes the initial metabolic reaction of anaerobic taurine degradation, i.e. the transamination reaction between taurine and pyruvate leading to sulfoacetaldehyde and alanine. In Bilophila wadsworthia (strain 3_1_6), this protein is Taurine--pyruvate aminotransferase.